A 167-amino-acid polypeptide reads, in one-letter code: CS6 fimbrial subunit B (167 aa).

Residues 1 to 21 form the signal peptide; sequence MLKKIIPAIVLIAGTSGVVNA.

The protein localises to the fimbrium. This is CS6 fimbrial subunit B (cssB) from Escherichia coli.